A 442-amino-acid polypeptide reads, in one-letter code: Limonoid 1-O-acetyltransferse (442 aa).

Active-site proton acceptor residues include His155 and Asp381.

It belongs to the plant acyltransferase family. As to quaternary structure, monomer.

The enzyme catalyses (1S)-1-hydroxy-luvungin A + acetyl-CoA = (1S)-1-acetoxy-luvungin A + CoA. The protein operates within secondary metabolite biosynthesis; terpenoid biosynthesis. Its function is as follows. Acetyltransferase involved in the biosynthesis of limonoids triterpene natural products such as limonin, a compound with insecticidal activity responsible for the bitter taste in citrus. Catalyzes the formation of (1S)-1-acetoxy-luvungin A from (1S)-1-hydroxy-luvungin A. This is Limonoid 1-O-acetyltransferse from Citrus sinensis (Sweet orange).